Reading from the N-terminus, the 299-residue chain is Pyridoxal 5'-phosphate synthase subunit PdxS (299 aa).

Aspartate 24 serves as a coordination point for D-ribose 5-phosphate. Lysine 81 functions as the Schiff-base intermediate with D-ribose 5-phosphate in the catalytic mechanism. Residue glycine 153 coordinates D-ribose 5-phosphate. D-glyceraldehyde 3-phosphate is bound at residue arginine 165. D-ribose 5-phosphate contacts are provided by residues glycine 219 and 240–241; that span reads GS.

The protein belongs to the PdxS/SNZ family. In terms of assembly, in the presence of PdxT, forms a dodecamer of heterodimers.

It catalyses the reaction aldehydo-D-ribose 5-phosphate + D-glyceraldehyde 3-phosphate + L-glutamine = pyridoxal 5'-phosphate + L-glutamate + phosphate + 3 H2O + H(+). The protein operates within cofactor biosynthesis; pyridoxal 5'-phosphate biosynthesis. Catalyzes the formation of pyridoxal 5'-phosphate from ribose 5-phosphate (RBP), glyceraldehyde 3-phosphate (G3P) and ammonia. The ammonia is provided by the PdxT subunit. Can also use ribulose 5-phosphate and dihydroxyacetone phosphate as substrates, resulting from enzyme-catalyzed isomerization of RBP and G3P, respectively. In Methanococcus maripaludis (strain DSM 14266 / JCM 13030 / NBRC 101832 / S2 / LL), this protein is Pyridoxal 5'-phosphate synthase subunit PdxS.